We begin with the raw amino-acid sequence, 480 residues long: Adenosylhomocysteinase (480 aa).

Residues Thr-63, Asp-142, and Glu-203 each coordinate substrate. Residue 204–206 (TTT) participates in NAD(+) binding. Residues Lys-233 and Asp-237 each contribute to the substrate site. NAD(+) is bound by residues Asn-238, 267–272 (GYGDVG), Glu-290, Asn-325, 346–348 (IGH), and Asn-394.

The protein belongs to the adenosylhomocysteinase family. NAD(+) serves as cofactor.

Its subcellular location is the cytoplasm. It catalyses the reaction S-adenosyl-L-homocysteine + H2O = L-homocysteine + adenosine. The protein operates within amino-acid biosynthesis; L-homocysteine biosynthesis; L-homocysteine from S-adenosyl-L-homocysteine: step 1/1. In terms of biological role, may play a key role in the regulation of the intracellular concentration of adenosylhomocysteine. In Xylella fastidiosa (strain 9a5c), this protein is Adenosylhomocysteinase.